Reading from the N-terminus, the 335-residue chain is ETS translocation variant 2 (335 aa).

Disordered stretches follow at residues 94-138 (DPWS…SWSH) and 201-220 (GHQSPAFTTPSKSNKQSDRA). Over residues 205-220 (PAFTTPSKSNKQSDRA) the composition is skewed to polar residues. The segment at residues 234-314 (IQLWQFLLEL…GGRKYTYRFG (81 aa)) is a DNA-binding region (ETS).

Belongs to the ETS family. In terms of tissue distribution, testis.

Its subcellular location is the nucleus. Its function is as follows. Binds to DNA sequences containing the consensus pentanucleotide 5'-CGGA[AT]-3'. The sequence is that of ETS translocation variant 2 (Etv2) from Mus musculus (Mouse).